A 519-amino-acid chain; its full sequence is Ribonuclease Y (519 aa).

The chain crosses the membrane as a helical span at residues 3-23 (PLAILISILLSLFCLVVGYYV). Residues 209–272 (TVSVVNLPND…ETARIALDKL (64 aa)) form the KH domain. The HD domain occupies 335–428 (VLKHSMEVAF…VAAADALSAA (94 aa)).

The protein belongs to the RNase Y family.

It is found in the cell membrane. Its function is as follows. Endoribonuclease that initiates mRNA decay. This is Ribonuclease Y from Bacillus licheniformis (strain ATCC 14580 / DSM 13 / JCM 2505 / CCUG 7422 / NBRC 12200 / NCIMB 9375 / NCTC 10341 / NRRL NRS-1264 / Gibson 46).